We begin with the raw amino-acid sequence, 176 residues long: Cytochrome b (176 aa).

The next 3 helical transmembrane spans lie at 33–53 (FGSLLGVCLIVQILTGLFLAM), 77–98 (WLLRYLHANGASMFFICLYLHI), and 113–133 (WNVGVILLFAVMATAFMGYVL). The heme b site is built by histidine 83 and histidine 97.

This sequence belongs to the cytochrome b family. In terms of assembly, the cytochrome bc1 complex contains 11 subunits: 3 respiratory subunits (MT-CYB, CYC1 and UQCRFS1), 2 core proteins (UQCRC1 and UQCRC2) and 6 low-molecular weight proteins (UQCRH/QCR6, UQCRB/QCR7, UQCRQ/QCR8, UQCR10/QCR9, UQCR11/QCR10 and a cleavage product of UQCRFS1). This cytochrome bc1 complex then forms a dimer. The cofactor is heme b.

Its subcellular location is the mitochondrion inner membrane. Component of the ubiquinol-cytochrome c reductase complex (complex III or cytochrome b-c1 complex) that is part of the mitochondrial respiratory chain. The b-c1 complex mediates electron transfer from ubiquinol to cytochrome c. Contributes to the generation of a proton gradient across the mitochondrial membrane that is then used for ATP synthesis. This Nyctinomops aurispinosus (Peale's free-tailed bat) protein is Cytochrome b (MT-CYB).